Reading from the N-terminus, the 375-residue chain is Growth/differentiation factor 8 (375 aa).

The N-terminal stretch at 1–18 (MQKLQISVYIYLFMLIVA) is a signal peptide. The propeptide occupies 19–266 (GPVDLNENSE…VTDTPKRSRR (248 aa)). N-linked (GlcNAc...) asparagine glycosylation is found at N47 and N71. 4 disulfide bridges follow: C272/C282, C281/C340, C309/C372, and C313/C374.

The protein belongs to the TGF-beta family. In terms of assembly, homodimer; disulfide-linked. Interacts with WFIKKN2, leading to inhibit its activity. Interacts with FSTL3. Post-translationally, synthesized as large precursor molecule that undergoes proteolytic cleavage to generate an N-terminal propeptide and a disulfide linked C-terminal dimer, which is the biologically active molecule. The circulating form consists of a latent complex of the C-terminal dimer and other proteins, including its propeptide, which maintain the C-terminal dimer in a latent, inactive state. Ligand activation requires additional cleavage of the prodomain by a tolloid-like metalloproteinase.

It localises to the secreted. Acts specifically as a negative regulator of skeletal muscle growth. This chain is Growth/differentiation factor 8 (MSTN), found in Bos gaurus (Seladang).